A 381-amino-acid polypeptide reads, in one-letter code: Neuropeptide Y receptor type 2 (381 aa).

The disordered stretch occupies residues 1–37 (MGPVGAEADENQTVEVKVEPYGPGHTTPRGELPPDPE). Topologically, residues 1-51 (MGPVGAEADENQTVEVKVEPYGPGHTTPRGELPPDPEPELIDSTKLVEVQV) are extracellular. The N-linked (GlcNAc...) asparagine glycan is linked to N11. Residues 52 to 72 (ILILAYCSIILLGVVGNSLVI) traverse the membrane as a helical segment. The Cytoplasmic segment spans residues 73 to 86 (HVVIKFKSMRTVTN). Residues 87–107 (FFIANLAVADLLVNTLCLPFT) traverse the membrane as a helical segment. The Extracellular segment spans residues 108–124 (LTYTLMGEWKMGPVLCH). An intrachain disulfide couples C123 to C203. Residues 125 to 145 (LVPYAQGLAVQVSTITLTVIA) form a helical membrane-spanning segment. The Cytoplasmic portion of the chain corresponds to 146–165 (LDRHRCIVYHLESKISKRIS). The chain crosses the membrane as a helical span at residues 166-186 (FLIIGLAWGISALLASPLAIF). The Extracellular portion of the chain corresponds to 187–216 (REYSLIEIIPDFEIVACTEKWPGEEKSVYG). Residues 217–237 (TVYSLSTLLILYVLPLGIISF) traverse the membrane as a helical segment. The Cytoplasmic segment spans residues 238-268 (SYTRIWSKLRNHVSPGAASDHYHQRRHKMTK). The chain crosses the membrane as a helical span at residues 269–289 (MLVCVVVVFAVSWLPLHAFQL). Residues 290 to 304 (AVDIDSHVLDLKEYK) lie on the Extracellular side of the membrane. The helical transmembrane segment at 305 to 325 (LIFTVFHIIAMCSTFANPLLY) threads the bilayer. The Cytoplasmic portion of the chain corresponds to 326–381 (GWMNSNYRKAFLSAFRCEQRLDAIHSEVSMTFKAKKNLEVKKNNGPTDSFSEATNV). Residue C342 is the site of S-palmitoyl cysteine attachment.

It belongs to the G-protein coupled receptor 1 family.

The protein resides in the cell membrane. In terms of biological role, receptor for neuropeptide Y and peptide YY. This Mus musculus (Mouse) protein is Neuropeptide Y receptor type 2 (Npy2r).